A 273-amino-acid polypeptide reads, in one-letter code: Small ribosomal subunit protein uS2 (273 aa).

Residues 244-273 are disordered; that stretch reads SDEEANSSAEENENRQEDLLAKKYDSSEAN. The segment covering 255–273 has biased composition (basic and acidic residues); that stretch reads NENRQEDLLAKKYDSSEAN.

Belongs to the universal ribosomal protein uS2 family.

This chain is Small ribosomal subunit protein uS2, found in Chlamydia felis (strain Fe/C-56) (Chlamydophila felis).